The chain runs to 240 residues: MSHAAPAHKRILLKLSGEALMGSDAFGINHATIVRMVQEIAEVTRLGVQVAVVIGGGNIFRGVAGGAVGMDRATADYMGMLATVMNALALADAMNKQALVARVMSAIAIEQVVEPYVRPKALQYLEEGKVVIFAAGTGNPFFTTDTAAALRGAEIGAEVVLKATKVDGVYTADPQKDPTATRYAKLSFDEAMARNLGIMDATAFALCRDQRLPVRVFSIIKHGAFKRVVMGEDEGTLVYV.

An ATP-binding site is contributed by 14–17 (KLSG). G56 serves as a coordination point for UMP. ATP contacts are provided by G57 and R61. Residues D76 and 137–144 (TGNPFFTT) contribute to the UMP site. Residues T164, Y170, and D173 each contribute to the ATP site.

Belongs to the UMP kinase family. In terms of assembly, homohexamer.

The protein resides in the cytoplasm. It carries out the reaction UMP + ATP = UDP + ADP. The protein operates within pyrimidine metabolism; CTP biosynthesis via de novo pathway; UDP from UMP (UMPK route): step 1/1. With respect to regulation, inhibited by UTP. Functionally, catalyzes the reversible phosphorylation of UMP to UDP. This chain is Uridylate kinase, found in Verminephrobacter eiseniae (strain EF01-2).